A 389-amino-acid polypeptide reads, in one-letter code: Na(+)/H(+) antiporter NhaA (389 aa).

A run of 11 helical transmembrane segments spans residues 17–37 (ILLL…LAGL), 59–79 (LLLW…GLEV), 95–115 (SLPT…YLLF), 124–144 (AGWA…MALL), 154–174 (VFLL…IALF), 177–197 (TDLS…LVAL), 213–233 (LVLW…GVII), 261–281 (FLIL…NMSL), 287–307 (PVPV…VMLF), 328–348 (IAPV…IASL), and 363–383 (LGTL…LSKV).

This sequence belongs to the NhaA Na(+)/H(+) (TC 2.A.33) antiporter family.

The protein localises to the cell inner membrane. It catalyses the reaction Na(+)(in) + 2 H(+)(out) = Na(+)(out) + 2 H(+)(in). In terms of biological role, na(+)/H(+) antiporter that extrudes sodium in exchange for external protons. The sequence is that of Na(+)/H(+) antiporter NhaA from Shewanella sp. (strain MR-4).